The sequence spans 46 residues: uncharacterized protein (46 aa).

A helical membrane pass occupies residues 12-34; sequence HFNHFVIALSFIYGLTELGYLLL.

It localises to the cell membrane. This is an uncharacterized protein from Bacillus subtilis (strain 168).